The following is a 363-amino-acid chain: 3-dehydroquinate synthase (363 aa).

Residues 109-113 (GATTD), 133-134 (TT), Lys146, and Lys155 contribute to the NAD(+) site. Positions 188, 251, and 267 each coordinate Zn(2+).

Belongs to the sugar phosphate cyclases superfamily. Dehydroquinate synthase family. It depends on NAD(+) as a cofactor. Co(2+) serves as cofactor. The cofactor is Zn(2+).

The protein resides in the cytoplasm. It carries out the reaction 7-phospho-2-dehydro-3-deoxy-D-arabino-heptonate = 3-dehydroquinate + phosphate. Its pathway is metabolic intermediate biosynthesis; chorismate biosynthesis; chorismate from D-erythrose 4-phosphate and phosphoenolpyruvate: step 2/7. Catalyzes the conversion of 3-deoxy-D-arabino-heptulosonate 7-phosphate (DAHP) to dehydroquinate (DHQ). The polypeptide is 3-dehydroquinate synthase (Streptomyces avermitilis (strain ATCC 31267 / DSM 46492 / JCM 5070 / NBRC 14893 / NCIMB 12804 / NRRL 8165 / MA-4680)).